The primary structure comprises 192 residues: Probable nicotinate-nucleotide adenylyltransferase (192 aa).

This sequence belongs to the NadD family.

It catalyses the reaction nicotinate beta-D-ribonucleotide + ATP + H(+) = deamido-NAD(+) + diphosphate. The protein operates within cofactor biosynthesis; NAD(+) biosynthesis; deamido-NAD(+) from nicotinate D-ribonucleotide: step 1/1. Catalyzes the reversible adenylation of nicotinate mononucleotide (NaMN) to nicotinic acid adenine dinucleotide (NaAD). This is Probable nicotinate-nucleotide adenylyltransferase from Cytophaga hutchinsonii (strain ATCC 33406 / DSM 1761 / CIP 103989 / NBRC 15051 / NCIMB 9469 / D465).